We begin with the raw amino-acid sequence, 382 residues long: ATP phosphoribosyltransferase regulatory subunit (382 aa).

Belongs to the class-II aminoacyl-tRNA synthetase family. HisZ subfamily. In terms of assembly, heteromultimer composed of HisG and HisZ subunits.

It localises to the cytoplasm. Its pathway is amino-acid biosynthesis; L-histidine biosynthesis; L-histidine from 5-phospho-alpha-D-ribose 1-diphosphate: step 1/9. In terms of biological role, required for the first step of histidine biosynthesis. May allow the feedback regulation of ATP phosphoribosyltransferase activity by histidine. The sequence is that of ATP phosphoribosyltransferase regulatory subunit from Burkholderia pseudomallei (strain 668).